Consider the following 90-residue polypeptide: DNA-binding protein HU-beta (90 aa).

Belongs to the bacterial histone-like protein family. As to quaternary structure, heterodimer of an alpha and a beta chain.

Functionally, histone-like DNA-binding protein which is capable of wrapping DNA to stabilize it, and thus to prevent its denaturation under extreme environmental conditions. This chain is DNA-binding protein HU-beta (hupB), found in Salmonella typhi.